An 867-amino-acid chain; its full sequence is DNA mismatch repair protein MutS (867 aa).

609-616 (GPNMSGKS) contributes to the ATP binding site.

The protein belongs to the DNA mismatch repair MutS family.

In terms of biological role, this protein is involved in the repair of mismatches in DNA. It is possible that it carries out the mismatch recognition step. This protein has a weak ATPase activity. The chain is DNA mismatch repair protein MutS from Latilactobacillus sakei subsp. sakei (strain 23K) (Lactobacillus sakei subsp. sakei).